The following is a 315-amino-acid chain: Probable phosphate transport system permease protein PstC (315 aa).

Transmembrane regions (helical) follow at residues I18–Y38, I80–F100, I119–L139, C167–I187, G227–G247, and V283–I303. An ABC transmembrane type-1 domain is found at I76–G302.

The protein belongs to the binding-protein-dependent transport system permease family. CysTW subfamily.

It is found in the cell membrane. Part of the binding-protein-dependent transport system for phosphate; probably responsible for the translocation of the substrate across the membrane. The sequence is that of Probable phosphate transport system permease protein PstC (pstC) from Methanocaldococcus jannaschii (strain ATCC 43067 / DSM 2661 / JAL-1 / JCM 10045 / NBRC 100440) (Methanococcus jannaschii).